The chain runs to 315 residues: MAQLGGAANRAPTASLAPTSQSLRCAPQPRPSRADTGSLGRYWGKAAAAASREHPFPGTLMHSAAGSGRRRGALRELLGLQRAAPAGWLSEERAEELGGPSGPGSSRLCLEPREHAWILAAAEGRYEVLRELLEAEPELLLRGDPITGYSVLHWLAKHGRHEELILVHDFALRRGLRLDVSAPGSGGLTPLHLAALQGHDMVIKVLVGALGADATRRDHSGHRACHYLRPDAPWRLRELSGAEEWEMESGSGCTNLNNNSSGTTAWRAASAVGATAVETSRRVAASRTKAKDTAGSRVAQMHSLFRHLFPSFQDR.

The interval methionine 1–leucine 39 is disordered. ANK repeat units follow at residues proline 112–leucine 141, threonine 147–glutamate 162, and glycine 186–arginine 216.

Belongs to the SOWAH family.

In Homo sapiens (Human), this protein is Ankyrin repeat domain-containing protein SOWAHD (SOWAHD).